The chain runs to 126 residues: MGFFWALLSVGLVSAAQLLLRSAMVALPPLTDIVAFLQHLLHFQPGTFGLFFGLLGYLLSMVCWYFALHRLPLSKAYALLSLSYILVWAAAIWLPGWHEPFYWQSLLGVAIIVAGVLTIFWPVKRR.

The helical transmembrane segment at 1 to 21 threads the bilayer; it reads MGFFWALLSVGLVSAAQLLLR. Residues 22–47 are Periplasmic-facing; sequence SAMVALPPLTDIVAFLQHLLHFQPGT. The helical transmembrane segment at 48–68 threads the bilayer; it reads FGLFFGLLGYLLSMVCWYFAL. Over 69 to 76 the chain is Cytoplasmic; sequence HRLPLSKA. Residues 77–97 traverse the membrane as a helical segment; sequence YALLSLSYILVWAAAIWLPGW. Residues 98–100 are Periplasmic-facing; sequence HEP. Residues 101-121 traverse the membrane as a helical segment; that stretch reads FYWQSLLGVAIIVAGVLTIFW. The Cytoplasmic portion of the chain corresponds to 122–126; it reads PVKRR.

It belongs to the ArnF family. As to quaternary structure, heterodimer of ArnE and ArnF.

It localises to the cell inner membrane. The protein operates within bacterial outer membrane biogenesis; lipopolysaccharide biosynthesis. Its function is as follows. Translocates 4-amino-4-deoxy-L-arabinose-phosphoundecaprenol (alpha-L-Ara4N-phosphoundecaprenol) from the cytoplasmic to the periplasmic side of the inner membrane. This Klebsiella pneumoniae subsp. pneumoniae (strain ATCC 700721 / MGH 78578) protein is Probable 4-amino-4-deoxy-L-arabinose-phosphoundecaprenol flippase subunit ArnF.